An 80-amino-acid polypeptide reads, in one-letter code: Exodeoxyribonuclease 7 small subunit (80 aa).

This sequence belongs to the XseB family. In terms of assembly, heterooligomer composed of large and small subunits.

Its subcellular location is the cytoplasm. It catalyses the reaction Exonucleolytic cleavage in either 5'- to 3'- or 3'- to 5'-direction to yield nucleoside 5'-phosphates.. Its function is as follows. Bidirectionally degrades single-stranded DNA into large acid-insoluble oligonucleotides, which are then degraded further into small acid-soluble oligonucleotides. The sequence is that of Exodeoxyribonuclease 7 small subunit from Photobacterium profundum (strain SS9).